The sequence spans 282 residues: Elongation factor Ts (282 aa).

The interval 81 to 84 (TDFV) is involved in Mg(2+) ion dislocation from EF-Tu. The segment covering 218 to 270 (KPAQPAQVAEVAAAPPAEPVADQPAAEPPAESVAPEPVVAESADAEPAPAAEG) has biased composition (low complexity). The interval 218 to 282 (KPAQPAQVAE…SKKGSTKKKK (65 aa)) is disordered. Residues 273–282 (SKKGSTKKKK) show a composition bias toward basic residues.

The protein belongs to the EF-Ts family.

The protein localises to the cytoplasm. Its function is as follows. Associates with the EF-Tu.GDP complex and induces the exchange of GDP to GTP. It remains bound to the aminoacyl-tRNA.EF-Tu.GTP complex up to the GTP hydrolysis stage on the ribosome. The protein is Elongation factor Ts of Synechococcus sp. (strain JA-3-3Ab) (Cyanobacteria bacterium Yellowstone A-Prime).